A 288-amino-acid chain; its full sequence is 33 kDa chaperonin (288 aa).

2 disulfide bridges follow: C233/C235 and C267/C270.

The protein belongs to the HSP33 family. Post-translationally, under oxidizing conditions two disulfide bonds are formed involving the reactive cysteines. Under reducing conditions zinc is bound to the reactive cysteines and the protein is inactive.

It is found in the cytoplasm. Redox regulated molecular chaperone. Protects both thermally unfolding and oxidatively damaged proteins from irreversible aggregation. Plays an important role in the bacterial defense system toward oxidative stress. This chain is 33 kDa chaperonin, found in Actinobacillus succinogenes (strain ATCC 55618 / DSM 22257 / CCUG 43843 / 130Z).